The following is a 256-amino-acid chain: Type III pantothenate kinase (256 aa).

6 to 13 (DCGNTNTV) contacts ATP. 107–110 (GPDR) lines the substrate pocket. The active-site Proton acceptor is the D109. Residue D129 coordinates K(+). T132 provides a ligand contact to ATP. T184 lines the substrate pocket.

The protein belongs to the type III pantothenate kinase family. Homodimer. The cofactor is NH4(+). Requires K(+) as cofactor.

It is found in the cytoplasm. It catalyses the reaction (R)-pantothenate + ATP = (R)-4'-phosphopantothenate + ADP + H(+). It functions in the pathway cofactor biosynthesis; coenzyme A biosynthesis; CoA from (R)-pantothenate: step 1/5. Catalyzes the phosphorylation of pantothenate (Pan), the first step in CoA biosynthesis. This is Type III pantothenate kinase from Dinoroseobacter shibae (strain DSM 16493 / NCIMB 14021 / DFL 12).